Consider the following 300-residue polypeptide: 4-hydroxy-tetrahydrodipicolinate synthase (300 aa).

Thr56 is a pyruvate binding site. Tyr145 (proton donor/acceptor) is an active-site residue. Residue Lys173 is the Schiff-base intermediate with substrate of the active site. Position 215 (Val215) interacts with pyruvate.

It belongs to the DapA family. In terms of assembly, homotetramer; dimer of dimers.

The protein resides in the cytoplasm. The enzyme catalyses L-aspartate 4-semialdehyde + pyruvate = (2S,4S)-4-hydroxy-2,3,4,5-tetrahydrodipicolinate + H2O + H(+). It functions in the pathway amino-acid biosynthesis; L-lysine biosynthesis via DAP pathway; (S)-tetrahydrodipicolinate from L-aspartate: step 3/4. In terms of biological role, catalyzes the condensation of (S)-aspartate-beta-semialdehyde [(S)-ASA] and pyruvate to 4-hydroxy-tetrahydrodipicolinate (HTPA). The sequence is that of 4-hydroxy-tetrahydrodipicolinate synthase from Prochlorococcus marinus (strain MIT 9301).